A 750-amino-acid chain; its full sequence is uncharacterized protein (750 aa).

The next 3 membrane-spanning stretches (helical) occupy residues 1-21 (MSIISSWLLVSIICLTTSIVT), 465-485 (YGANETGIATFIPGSSIISYL), and 586-606 (GMFGAAIYSWNFEGMSFVAVS).

The protein resides in the membrane. This is an uncharacterized protein from Saccharomyces cerevisiae (strain ATCC 204508 / S288c) (Baker's yeast).